The sequence spans 245 residues: tRNA pseudouridine synthase A (245 aa).

Asp-52 serves as the catalytic Nucleophile. A substrate-binding site is contributed by Tyr-111.

Belongs to the tRNA pseudouridine synthase TruA family. Homodimer.

It catalyses the reaction uridine(38/39/40) in tRNA = pseudouridine(38/39/40) in tRNA. In terms of biological role, formation of pseudouridine at positions 38, 39 and 40 in the anticodon stem and loop of transfer RNAs. The protein is tRNA pseudouridine synthase A of Rhodospirillum centenum (strain ATCC 51521 / SW).